Consider the following 45-residue polypeptide: Photosystem II reaction center protein K (45 aa).

Positions 1 to 8 are excised as a propeptide; that stretch reads MITAIIIA. Residues 23 to 43 traverse the membrane as a helical segment; that stretch reads ILPVIPIFFLLLAFVWQAAIG.

The protein belongs to the PsbK family. In terms of assembly, PSII is composed of 1 copy each of membrane proteins PsbA, PsbB, PsbC, PsbD, PsbE, PsbF, PsbH, PsbI, PsbJ, PsbK, PsbL, PsbM, PsbT, PsbX, PsbY, PsbZ, Psb30/Ycf12, at least 3 peripheral proteins of the oxygen-evolving complex and a large number of cofactors. It forms dimeric complexes.

It is found in the plastid. The protein localises to the chloroplast thylakoid membrane. One of the components of the core complex of photosystem II (PSII). PSII is a light-driven water:plastoquinone oxidoreductase that uses light energy to abstract electrons from H(2)O, generating O(2) and a proton gradient subsequently used for ATP formation. It consists of a core antenna complex that captures photons, and an electron transfer chain that converts photonic excitation into a charge separation. The chain is Photosystem II reaction center protein K from Gracilaria tenuistipitata var. liui (Red alga).